Consider the following 247-residue polypeptide: Putative 2-succinyl-6-hydroxy-2,4-cyclohexadiene-1-carboxylate synthase (247 aa).

The AB hydrolase-1 domain occupies 4–229 (IIFLHGLLGT…CAGHNSHLEN (226 aa)).

Belongs to the AB hydrolase superfamily. MenH family. In terms of assembly, monomer.

It carries out the reaction 5-enolpyruvoyl-6-hydroxy-2-succinyl-cyclohex-3-ene-1-carboxylate = (1R,6R)-6-hydroxy-2-succinyl-cyclohexa-2,4-diene-1-carboxylate + pyruvate. The protein operates within quinol/quinone metabolism; 1,4-dihydroxy-2-naphthoate biosynthesis; 1,4-dihydroxy-2-naphthoate from chorismate: step 3/7. It functions in the pathway quinol/quinone metabolism; menaquinone biosynthesis. Its function is as follows. Catalyzes a proton abstraction reaction that results in 2,5-elimination of pyruvate from 2-succinyl-5-enolpyruvyl-6-hydroxy-3-cyclohexene-1-carboxylate (SEPHCHC) and the formation of 2-succinyl-6-hydroxy-2,4-cyclohexadiene-1-carboxylate (SHCHC). The chain is Putative 2-succinyl-6-hydroxy-2,4-cyclohexadiene-1-carboxylate synthase from Haemophilus influenzae (strain ATCC 51907 / DSM 11121 / KW20 / Rd).